The following is a 219-amino-acid chain: Large ribosomal subunit protein uL3 (219 aa).

This sequence belongs to the universal ribosomal protein uL3 family. Part of the 50S ribosomal subunit. Forms a cluster with proteins L14 and L19.

One of the primary rRNA binding proteins, it binds directly near the 3'-end of the 23S rRNA, where it nucleates assembly of the 50S subunit. The sequence is that of Large ribosomal subunit protein uL3 from Chlamydia pneumoniae (Chlamydophila pneumoniae).